The chain runs to 540 residues: Probable G-protein coupled receptor 75 (540 aa).

At 1-46 the chain is on the extracellular side; the sequence is MNTSAPLQNVPNATLLNMPPLHGGNSTSLQEGLRDFIHTATLVTCT. N-linked (GlcNAc...) asparagine glycans are attached at residues N2 and N25. A helical membrane pass occupies residues 47–67; that stretch reads FLLAIIFCLGSYGNFIVFLSF. Over 68-86 the chain is Cytoplasmic; that stretch reads FDPSFRKFRTNFDFMILNL. Residues 87 to 107 traverse the membrane as a helical segment; the sequence is SFCDLFICGVTAPMFTFVLFF. Over 108-120 the chain is Extracellular; that stretch reads SSASSIPDSFCFT. The chain crosses the membrane as a helical span at residues 121–141; sequence FHLTSSGFVIMSLKMVAVIAL. The Cytoplasmic portion of the chain corresponds to 142–160; it reads HRLRMVMGKQPNCTASFSC. Residues 161–181 traverse the membrane as a helical segment; that stretch reads ILLLTLLLWATSFTLATLATL. Topologically, residues 182–205 are extracellular; the sequence is RTNKSHLCLPMSSLMDGEGKAILS. N-linked (GlcNAc...) asparagine glycosylation occurs at N184. Residues 206-226 form a helical membrane-spanning segment; the sequence is LYVVDFTFCVAVVSVSYIMIA. The Cytoplasmic segment spans residues 227–318; that stretch reads QTLRKNAQVK…INFSTAKDSK (92 aa). A helical transmembrane segment spans residues 319–339; that stretch reads AVVTCVVIVLSVLVCCLPLGI. Over 340–350 the chain is Extracellular; sequence SLVQMVLSDNG. The chain crosses the membrane as a helical span at residues 351–371; the sequence is SFILYQFELFGFTLIFFKSGL. Residues 372 to 540 lie on the Cytoplasmic side of the membrane; it reads NPFIYSRNSA…SAKQIPIPSV (169 aa). The interval 443–475 is disordered; that stretch reads DQACGPSHSKESAASPKVSAGHQPCGQSSSTPI.

It belongs to the G-protein coupled receptor 1 family. Highly expressed in brain and heart. Also detected in skeletal muscle, liver and kidney. Also expressed by islet cells (at protein level).

The protein resides in the cell membrane. Its function is as follows. G protein-coupled receptor that is activated by the chemokine CCL5/RANTES. Probably coupled to heterotrimeric Gq proteins, it stimulates inositol trisphosphate production and calcium mobilization upon activation. Together with CCL5/RANTES, may play a role in neuron survival through activation of a downstream signaling pathway involving the PI3, Akt and MAP kinases. CCL5/RANTES may also regulate insulin secretion by pancreatic islet cells through activation of this receptor. The chain is Probable G-protein coupled receptor 75 (Gpr75) from Mus musculus (Mouse).